Consider the following 184-residue polypeptide: Signal peptidase complex subunit 3 (184 aa).

Over 1 to 14 (MFSFVQRFQNVSNQ) the chain is Cytoplasmic. A helical; Signal-anchor for type II membrane protein transmembrane segment spans residues 15–35 (AFSMGIVMVVFIMASSYYQLI). Residues 36–184 (NNNAFSVPSN…TLTVENKNKV (149 aa)) lie on the Lumenal side of the membrane. 2 N-linked (GlcNAc...) asparagine glycosylation sites follow: asparagine 102 and asparagine 173.

It belongs to the SPCS3 family. In terms of assembly, component of the signal peptidase complex (SPC) composed of a catalytic subunit SEC11 and three accessory subunits SPC1, SPC2 and SPC3. The complex induces a local thinning of the ER membrane which is used to measure the length of the signal peptide (SP) h-region of protein substrates. This ensures the selectivity of the complex towards h-regions shorter than 18-20 amino acids. Interacts with SEC11. SPC associates with the translocon complex.

The protein resides in the endoplasmic reticulum membrane. Essential component of the signal peptidase complex (SPC) which catalyzes the cleavage of N-terminal signal sequences from nascent proteins as they are translocated into the lumen of the endoplasmic reticulum. Essential for the SPC catalytic activity, possibly by stabilizing and positioning the active center of the complex close to the lumenal surface. Essential for viability. The polypeptide is Signal peptidase complex subunit 3 (SPC3) (Saccharomyces cerevisiae (strain ATCC 204508 / S288c) (Baker's yeast)).